Consider the following 507-residue polypeptide: Maturase K (507 aa).

The protein belongs to the intron maturase 2 family. MatK subfamily.

Its subcellular location is the plastid. It localises to the chloroplast. In terms of biological role, usually encoded in the trnK tRNA gene intron. Probably assists in splicing its own and other chloroplast group II introns. In Kalmia buxifolia (Sand myrtle), this protein is Maturase K.